The following is a 343-amino-acid chain: N-acetyl-gamma-glutamyl-phosphate reductase (343 aa).

Cys-149 is an active-site residue.

It belongs to the NAGSA dehydrogenase family. Type 1 subfamily.

It localises to the cytoplasm. It catalyses the reaction N-acetyl-L-glutamate 5-semialdehyde + phosphate + NADP(+) = N-acetyl-L-glutamyl 5-phosphate + NADPH + H(+). The protein operates within amino-acid biosynthesis; L-arginine biosynthesis; N(2)-acetyl-L-ornithine from L-glutamate: step 3/4. Catalyzes the NADPH-dependent reduction of N-acetyl-5-glutamyl phosphate to yield N-acetyl-L-glutamate 5-semialdehyde. This Methanococcus maripaludis (strain C6 / ATCC BAA-1332) protein is N-acetyl-gamma-glutamyl-phosphate reductase.